Consider the following 306-residue polypeptide: MSISAAQVKELRDLTGAGMMDCKAALNETNGNMEEAVDWLRKKGISKADKKAGRTAAEGLIGVDAGVREAAVVEVNSETDFVARNAAFQEIVANVAKVALAYGTTEAVAAAKYPGSDKSVTDTIKDAVGTIGENLGFRRSAKLTVPHGAVATYVHNAVADGLGKLGVLVAIETTGNEHAANAFGRQVAMHVAATNPMALTAEQIDPAAVEREKAIFSDQARQSGKPEAIIEKMVEGRMRKFYEEVVLLKQAFVLNPDITVEKALKDAEKEIGAPAKITAYLRFALGEGIEKEETDFAAEVAAAVKK.

The interval 79-82 (TDFV) is involved in Mg(2+) ion dislocation from EF-Tu.

Belongs to the EF-Ts family.

The protein localises to the cytoplasm. In terms of biological role, associates with the EF-Tu.GDP complex and induces the exchange of GDP to GTP. It remains bound to the aminoacyl-tRNA.EF-Tu.GTP complex up to the GTP hydrolysis stage on the ribosome. The sequence is that of Elongation factor Ts from Mesorhizobium japonicum (strain LMG 29417 / CECT 9101 / MAFF 303099) (Mesorhizobium loti (strain MAFF 303099)).